Here is a 362-residue protein sequence, read N- to C-terminus: Isopentenyl-diphosphate delta-isomerase (362 aa).

Residue 5–6 (RK) coordinates substrate. FMN is bound by residues 63-65 (AMT), serine 93, and asparagine 122. Glutamine 152 contributes to the substrate binding site. Residue glutamate 153 participates in Mg(2+) binding. Residues lysine 184, threonine 214, 259 to 261 (GIR), and 280 to 281 (AG) contribute to the FMN site.

Belongs to the IPP isomerase type 2 family. Homooctamer. Dimer of tetramers. Requires FMN as cofactor. It depends on NADPH as a cofactor. Mg(2+) is required as a cofactor.

It localises to the cytoplasm. It carries out the reaction isopentenyl diphosphate = dimethylallyl diphosphate. Its function is as follows. Involved in the biosynthesis of isoprenoids. Catalyzes the 1,3-allylic rearrangement of the homoallylic substrate isopentenyl (IPP) to its allylic isomer, dimethylallyl diphosphate (DMAPP). The polypeptide is Isopentenyl-diphosphate delta-isomerase (Nocardia farcinica (strain IFM 10152)).